We begin with the raw amino-acid sequence, 394 residues long: Phosphopentomutase (394 aa).

The Mn(2+) site is built by Asp13, Asp286, His291, Asp327, His328, and His339.

Belongs to the phosphopentomutase family. Mn(2+) serves as cofactor.

Its subcellular location is the cytoplasm. It catalyses the reaction 2-deoxy-alpha-D-ribose 1-phosphate = 2-deoxy-D-ribose 5-phosphate. It carries out the reaction alpha-D-ribose 1-phosphate = D-ribose 5-phosphate. Its pathway is carbohydrate degradation; 2-deoxy-D-ribose 1-phosphate degradation; D-glyceraldehyde 3-phosphate and acetaldehyde from 2-deoxy-alpha-D-ribose 1-phosphate: step 1/2. Its function is as follows. Isomerase that catalyzes the conversion of deoxy-ribose 1-phosphate (dRib-1-P) and ribose 1-phosphate (Rib-1-P) to deoxy-ribose 5-phosphate (dRib-5-P) and ribose 5-phosphate (Rib-5-P), respectively. This Bacillus cereus (strain B4264) protein is Phosphopentomutase.